Here is a 329-residue protein sequence, read N- to C-terminus: Solute carrier family 35 member B1 (329 aa).

8 helical membrane passes run Ala-21–Ile-41, Thr-60–Phe-80, Trp-91–Leu-111, Tyr-142–Tyr-162, Val-175–Val-195, Thr-220–Thr-240, Ile-250–Tyr-270, and Val-292–Leu-312. The Di-lysine motif signature appears at Lys-325–His-329.

This sequence belongs to the nucleotide-sugar transporter family. SLC35B subfamily.

It localises to the endoplasmic reticulum membrane. Functionally, probable sugar transporter. The chain is Solute carrier family 35 member B1 (slc35b1) from Danio rerio (Zebrafish).